The chain runs to 469 residues: Zinc transporter SLC39A7 (469 aa).

A helical membrane pass occupies residues 10 to 30 (WVAVGLLTWATLGLLVAGLGG). Composition is skewed to basic and acidic residues over residues 42-56 (FHGH…DFHH) and 66-114 (HTHE…EHSH). The segment at 42–121 (FHGHSHRHSH…HSHGGYGESG (80 aa)) is disordered. A Pros-methylhistidine modification is found at H66. Transmembrane regions (helical) follow at residues 138–158 (ALGA…LIPV), 169–189 (LQIL…LHLI), and 214–234 (GPIL…LVVE). Residues 242 to 263 (GGHGHSHGHGHAHSHTRGSHGH) are compositionally biased toward basic residues. The interval 242 to 310 (GGHGHSHGHG…VRPQNAEEEK (69 aa)) is disordered. A compositionally biased stretch (basic and acidic residues) spans 264-285 (GRQERSTKEKQSSEEEEKETRG). Phosphoserine; by CK2 is present on residues S275 and S276. A run of 2 helical transmembrane segments spans residues 381 to 401 (MRLQ…ALLT) and 417 to 436 (GWVL…VSVL).

Belongs to the ZIP transporter (TC 2.A.5) family. KE4/Catsup subfamily. In terms of assembly, homodimer. Post-translationally, rapidly phosphorylated by CK2 following Zn(2+) treatment. This phosphorylation is required for efficient cytosolic Zn(2+) release. In terms of processing, methylation at some His residue by METTL9 leads to reduced zinc-binding. In terms of tissue distribution, widely expressed.

Its subcellular location is the endoplasmic reticulum membrane. It localises to the golgi apparatus. The protein localises to the cis-Golgi network membrane. It carries out the reaction Zn(2+)(in) = Zn(2+)(out). Phosphorylation activates zinc transport activity. In terms of biological role, transports Zn(2+) from the endoplasmic reticulum (ER)/Golgi apparatus to the cytosol, playing an essential role in the regulation of cytosolic zinc levels. Acts as a gatekeeper of zinc release from intracellular stores, requiring post-translational activation by phosphorylation, resulting in activation of multiple downstream pathways leading to cell growth and proliferation. Has an essential role in B cell development and is required for proper B cell receptor signaling. Plays an important role in maintaining intestinal epithelial homeostasis and skin dermis development by regulating ER function. Controls cell signaling pathways involved in glucose metabolism in skeletal muscle. Has a protective role against ER stress in different biological contexts. Mediates Zn(2+)-induced ferroptosis. The protein is Zinc transporter SLC39A7 (SLC39A7) of Homo sapiens (Human).